Reading from the N-terminus, the 166-residue chain is NAD(P)H-quinone oxidoreductase subunit I, chloroplastic (166 aa).

4Fe-4S ferredoxin-type domains are found at residues 55 to 84 and 95 to 124; these read GRIH…VDWK and LNYS…MTEE. [4Fe-4S] cluster contacts are provided by Cys-64, Cys-67, Cys-70, Cys-74, Cys-104, Cys-107, Cys-110, and Cys-114.

This sequence belongs to the complex I 23 kDa subunit family. As to quaternary structure, NDH is composed of at least 16 different subunits, 5 of which are encoded in the nucleus. It depends on [4Fe-4S] cluster as a cofactor.

The protein resides in the plastid. Its subcellular location is the chloroplast thylakoid membrane. It carries out the reaction a plastoquinone + NADH + (n+1) H(+)(in) = a plastoquinol + NAD(+) + n H(+)(out). The catalysed reaction is a plastoquinone + NADPH + (n+1) H(+)(in) = a plastoquinol + NADP(+) + n H(+)(out). In terms of biological role, NDH shuttles electrons from NAD(P)H:plastoquinone, via FMN and iron-sulfur (Fe-S) centers, to quinones in the photosynthetic chain and possibly in a chloroplast respiratory chain. The immediate electron acceptor for the enzyme in this species is believed to be plastoquinone. Couples the redox reaction to proton translocation, and thus conserves the redox energy in a proton gradient. The protein is NAD(P)H-quinone oxidoreductase subunit I, chloroplastic of Lactuca sativa (Garden lettuce).